A 236-amino-acid polypeptide reads, in one-letter code: ATP-dependent dethiobiotin synthetase BioD (236 aa).

Residue Thr19 coordinates Mg(2+). Lys40 is an active-site residue. Residues Asp61 and Glu122 each coordinate Mg(2+). Residues Asp61, 122–125 (EGVG), 182–183 (NT), and 211–213 (PRL) contribute to the ATP site.

The protein belongs to the dethiobiotin synthetase family. In terms of assembly, homodimer. Mg(2+) serves as cofactor.

Its subcellular location is the cytoplasm. It catalyses the reaction (7R,8S)-7,8-diammoniononanoate + CO2 + ATP = (4R,5S)-dethiobiotin + ADP + phosphate + 3 H(+). Its pathway is cofactor biosynthesis; biotin biosynthesis; biotin from 7,8-diaminononanoate: step 1/2. In terms of biological role, catalyzes a mechanistically unusual reaction, the ATP-dependent insertion of CO2 between the N7 and N8 nitrogen atoms of 7,8-diaminopelargonic acid (DAPA, also called 7,8-diammoniononanoate) to form a ureido ring. This chain is ATP-dependent dethiobiotin synthetase BioD, found in Janthinobacterium sp. (strain Marseille) (Minibacterium massiliensis).